We begin with the raw amino-acid sequence, 1026 residues long: Multidrug resistance protein MdtC (1026 aa).

11 consecutive transmembrane segments (helical) span residues 15–35, 333–353, 360–380, 387–407, 431–451, 463–483, 528–548, 853–873, 897–917, 953–973, and 984–1004; these read ILIA…LPVA, EVEE…FLFL, LIPA…MYLC, LSLM…IVVL, VGFT…PLLL, FAVT…TLTP, LVGV…IAIP, LILI…LYES, LFNA…IGIV, PIMM…LSGG, and ITIV…TPVV.

This sequence belongs to the resistance-nodulation-cell division (RND) (TC 2.A.6) family. MdtC subfamily. Part of a tripartite efflux system composed of MdtA, MdtB and MdtC. MdtC forms a heteromultimer with MdtB.

Its subcellular location is the cell inner membrane. The chain is Multidrug resistance protein MdtC from Salmonella paratyphi A (strain AKU_12601).